Consider the following 152-residue polypeptide: Protein PLANT CADMIUM RESISTANCE 2 (152 aa).

A helical transmembrane segment spans residues threonine 57 to tyrosine 79.

This sequence belongs to the cornifelin family. In terms of assembly, homooligomer. Expressed in roots, leaves, shoots, stems, flowers and siliques. In leaves, restricted mainly to the vascular tissue. Expressed in all cells in the root tip, in the vascular tissue and the epidermis in the elongation zone, and only in the epidermal cells in the root hair zone.

It is found in the cell membrane. Zinc transporter acting in both zinc extrusion and long-distance zinc transport. Involved in the loading of zinc into the xyleme and in the detoxification of excess zinc at the epidermal cells. Acts independently from the zinc transporters HMA2 and HMA4. May be also involved in cadmium resistance. In Arabidopsis thaliana (Mouse-ear cress), this protein is Protein PLANT CADMIUM RESISTANCE 2 (PCR2).